Here is a 508-residue protein sequence, read N- to C-terminus: Aspartic proteinase A3 (508 aa).

Residues 1–25 (MGTRFQSFLLVFLLSCLILISTASC) form the signal peptide. The propeptide at 26–69 (ERNGDGTIRIGLKKRKLDRSNRLASQLFLKNRGSHWSPKHYFRL) is activation peptide. One can recognise a Peptidase A1 domain in the interval 87-505 (YYGDITIGTP…DYGKGRVGFA (419 aa)). The active site involves aspartate 105. Intrachain disulfides connect cysteine 118/cysteine 124 and cysteine 283/cysteine 287. Aspartate 292 is a catalytic residue. The region spanning 317–419 (IVSRECKAVV…AELCDHIPTQ (103 aa)) is the Saposin B-type domain. 4 disulfides stabilise this stretch: cysteine 322-cysteine 413, cysteine 347-cysteine 385, cysteine 353-cysteine 382, and cysteine 427-cysteine 464. An N-linked (GlcNAc...) asparagine glycan is attached at asparagine 399.

This sequence belongs to the peptidase A1 family. As to expression, expressed in petals, carpels and seed pods.

It is found in the secreted. Involved in the processing and degradation of storage proteins. The protein is Aspartic proteinase A3 (APA3) of Arabidopsis thaliana (Mouse-ear cress).